Reading from the N-terminus, the 131-residue chain is uncharacterized protein (131 aa).

The next 2 helical transmembrane spans lie at Val68 to Ile88 and Val94 to Ile114.

It localises to the cell membrane. This is an uncharacterized protein from Methanocaldococcus jannaschii (strain ATCC 43067 / DSM 2661 / JAL-1 / JCM 10045 / NBRC 100440) (Methanococcus jannaschii).